Consider the following 197-residue polypeptide: Phosphoheptose isomerase (197 aa).

The SIS domain occupies 41–197 (VVETFRRGGK…EIVERTLFEE (157 aa)). Residue 56-58 (NGG) participates in substrate binding. Zn(2+) is bound by residues H65 and E69. Substrate is bound by residues E69, 98–99 (ND), 124–126 (STS), S129, and Q176. Residues Q176 and H184 each contribute to the Zn(2+) site.

It belongs to the SIS family. GmhA subfamily. The cofactor is Zn(2+).

The protein resides in the cytoplasm. It catalyses the reaction 2 D-sedoheptulose 7-phosphate = D-glycero-alpha-D-manno-heptose 7-phosphate + D-glycero-beta-D-manno-heptose 7-phosphate. The protein operates within carbohydrate biosynthesis; D-glycero-D-manno-heptose 7-phosphate biosynthesis; D-glycero-alpha-D-manno-heptose 7-phosphate and D-glycero-beta-D-manno-heptose 7-phosphate from sedoheptulose 7-phosphate: step 1/1. Functionally, catalyzes the isomerization of sedoheptulose 7-phosphate in D-glycero-D-manno-heptose 7-phosphate. The chain is Phosphoheptose isomerase from Roseiflexus sp. (strain RS-1).